Here is a 343-residue protein sequence, read N- to C-terminus: Palmitoyltransferase ZDHHC4 (343 aa).

Residues 1–2 (MD) lie on the Lumenal side of the membrane. Residues 3–23 (FLVLFSFYLAFLLICVIMICI) form a helical membrane-spanning segment. Residues 24 to 67 (FTKSQRLKAVVLGGAQVCARVTPQCFQRAVQTLLHQLFHTRHPA) lie on the Cytoplasmic side of the membrane. Residues 68 to 88 (FLALHLLLQGLVYAEYTYEVF) form a helical membrane-spanning segment. The Lumenal portion of the chain corresponds to 89-95 (SYCRELE). A helical transmembrane segment spans residues 96-116 (FSLPCLLLPYVLLSVNLVFFT). Topologically, residues 117–193 (LTCSTNPGTI…NCIGAWNTGY (77 aa)) are cytoplasmic. A DHHC domain is found at 149–199 (SRCSTCDLRKPARSKHCRVCDRCVHRFDHHCVWVNNCIGAWNTGYFLIYLL). Cys-179 acts as the S-palmitoyl cysteine intermediate in catalysis. A helical transmembrane segment spans residues 194–214 (FLIYLLTLTASAATIAILSAA). The Lumenal portion of the chain corresponds to 215 to 255 (FLLRLVAVSNLYQETYLDDLGRFQAVDTGFLIQHLFLAFPR). Residues 256-276 (IIFLLGFVIVLSLLLAGYLCF) traverse the membrane as a helical segment. The Cytoplasmic segment spans residues 277 to 343 (ALYLAATNQT…ATPSYKKKKR (67 aa)). The Di-lysine motif motif lies at 340–343 (KKKR).

It belongs to the DHHC palmitoyltransferase family. Interacts with CPT1A.

The protein localises to the endoplasmic reticulum membrane. It is found in the golgi apparatus membrane. Its subcellular location is the cell membrane. The catalysed reaction is L-cysteinyl-[protein] + hexadecanoyl-CoA = S-hexadecanoyl-L-cysteinyl-[protein] + CoA. Functionally, palmitoyltransferase that could catalyze the addition of palmitate onto protein substrates including the D(2) dopamine receptor DRD2, GSK3B or MAVS. Mediates GSK3B palmitoylation to prevent its AKT1-mediated phosphorylation leading to activation of the STAT3 signaling pathway. Also catalyzes MAVS palmitoylation which promotes its stabilization and activation by inhibiting 'Lys-48'- but facilitating 'Lys-63'-linked ubiquitination. The sequence is that of Palmitoyltransferase ZDHHC4 from Rattus norvegicus (Rat).